The sequence spans 107 residues: Replication restart protein PriB (107 aa).

The SSB domain maps to 1 to 97 (MNTLELSARV…LHLQQARRIA (97 aa)).

Belongs to the PriB family. In terms of assembly, homodimer. Interacts with PriA and DnaT. Component of the replication restart primosome. Primosome assembly occurs via a 'hand-off' mechanism. PriA binds to replication forks, subsequently PriB then DnaT bind; DnaT then displaces ssDNA to generate the helicase loading substrate.

Functionally, involved in the restart of stalled replication forks, which reloads the replicative helicase on sites other than the origin of replication; the PriA-PriB pathway is the major replication restart pathway. During primosome assembly it facilitates complex formation between PriA and DnaT on DNA; stabilizes PriA on DNA. Stimulates the DNA unwinding activity of PriA helicase. In Bordetella parapertussis (strain 12822 / ATCC BAA-587 / NCTC 13253), this protein is Replication restart protein PriB.